The chain runs to 447 residues: C4-dicarboxylate transport protein (447 aa).

8 helical membrane passes run 22–42 (FQVIVAIVLGAILGHYEPLVG), 52–72 (FINLVKMIIAPVIFLTIVTGI), 90–110 (AYFLFFSTLALIVGMIVAHVV), 159–179 (GNILQVLFIAVLFGIALASVG), 199–219 (LVHILMKAAPIGAFGAIAFTI), 232–252 (WLVGSFYLTAFLFVAVILGVV), 325–347 (LFIAQATNTELTLGHQIALLLVA), and 366–386 (AATLAVVPEVPVAGMALILGV).

It belongs to the dicarboxylate/amino acid:cation symporter (DAACS) (TC 2.A.23) family.

Its subcellular location is the cell inner membrane. Functionally, responsible for the transport of dicarboxylates such as succinate, fumarate, and malate from the periplasm across the membrane. The polypeptide is C4-dicarboxylate transport protein (Stenotrophomonas maltophilia (strain R551-3)).